We begin with the raw amino-acid sequence, 460 residues long: Bifunctional protein GlmU (460 aa).

A pyrophosphorylase region spans residues 1–232 (MALNVVILAA…AIEVEGANNR (232 aa)). UDP-N-acetyl-alpha-D-glucosamine contacts are provided by residues 8-11 (LAAG), lysine 22, glutamine 73, 78-79 (GT), 100-102 (YGD), glycine 137, glutamate 157, asparagine 172, and asparagine 230. Residue aspartate 102 coordinates Mg(2+). Asparagine 230 is a Mg(2+) binding site. The segment at 233 to 253 (VQLAQLERAYQAREAEKLMLA) is linker. Residues 254-460 (GANLRDPSRI…GWQRPVKIKK (207 aa)) form an N-acetyltransferase region. Positions 336 and 354 each coordinate UDP-N-acetyl-alpha-D-glucosamine. Histidine 366 functions as the Proton acceptor in the catalytic mechanism. The UDP-N-acetyl-alpha-D-glucosamine site is built by tyrosine 369 and asparagine 380. Residues alanine 383, 389–390 (NY), serine 408, alanine 426, and arginine 443 contribute to the acetyl-CoA site.

This sequence in the N-terminal section; belongs to the N-acetylglucosamine-1-phosphate uridyltransferase family. In the C-terminal section; belongs to the transferase hexapeptide repeat family. In terms of assembly, homotrimer. Requires Mg(2+) as cofactor.

The protein resides in the cytoplasm. The catalysed reaction is alpha-D-glucosamine 1-phosphate + acetyl-CoA = N-acetyl-alpha-D-glucosamine 1-phosphate + CoA + H(+). It catalyses the reaction N-acetyl-alpha-D-glucosamine 1-phosphate + UTP + H(+) = UDP-N-acetyl-alpha-D-glucosamine + diphosphate. Its pathway is nucleotide-sugar biosynthesis; UDP-N-acetyl-alpha-D-glucosamine biosynthesis; N-acetyl-alpha-D-glucosamine 1-phosphate from alpha-D-glucosamine 6-phosphate (route II): step 2/2. It functions in the pathway nucleotide-sugar biosynthesis; UDP-N-acetyl-alpha-D-glucosamine biosynthesis; UDP-N-acetyl-alpha-D-glucosamine from N-acetyl-alpha-D-glucosamine 1-phosphate: step 1/1. The protein operates within bacterial outer membrane biogenesis; LPS lipid A biosynthesis. Functionally, catalyzes the last two sequential reactions in the de novo biosynthetic pathway for UDP-N-acetylglucosamine (UDP-GlcNAc). The C-terminal domain catalyzes the transfer of acetyl group from acetyl coenzyme A to glucosamine-1-phosphate (GlcN-1-P) to produce N-acetylglucosamine-1-phosphate (GlcNAc-1-P), which is converted into UDP-GlcNAc by the transfer of uridine 5-monophosphate (from uridine 5-triphosphate), a reaction catalyzed by the N-terminal domain. This chain is Bifunctional protein GlmU, found in Shewanella baltica (strain OS223).